The primary structure comprises 526 residues: Cyclin-L1 (526 aa).

Residues 1-36 (MASGPHSTATAAAAASSAAPSAGGSSSGTTTTTTTT) form a disordered region. Cyclin-like regions lie at residues 88 to 190 (ELIQ…RVLK) and 203 to 287 (KIIV…ETLR). The segment at 318 to 526 (KGLNPDGTPA…SRSGHGRHRR (209 aa)) is disordered. Threonine 325 is subject to Phosphothreonine. Phosphoserine is present on residues serine 335 and serine 338. Residues lysine 339 and lysine 347 each participate in a glycyl lysine isopeptide (Lys-Gly) (interchain with G-Cter in SUMO2) cross-link. Basic and acidic residues predominate over residues 342-352 (SPREVKAEEKS). Phosphoserine is present on residues serine 352 and serine 355. Residues 361-370 (VKKEPEDRQQ) show a composition bias toward basic and acidic residues. A Glycyl lysine isopeptide (Lys-Gly) (interchain with G-Cter in SUMO2) cross-link involves residue lysine 362. The residue at position 374 (serine 374) is a Phosphoserine. Basic residues-rich tracts occupy residues 382-418 (DSKR…RRSR), 438-452 (RRHH…KAKH), 460-476 (SNRH…RSQS), and 486-498 (KKHR…HRDR). The interval 390 to 432 (RSASRSRSRTRSRSRSHTPRRHYNNRRSRSGTYSSRSRSRSRS) is RS. Residue serine 445 is modified to Phosphoserine. A compositionally biased stretch (basic and acidic residues) spans 499-508 (RERSRSFERS). Over residues 509–526 (HKSKHHGGSRSGHGRHRR) the composition is skewed to basic residues.

The protein belongs to the cyclin family. Cyclin L subfamily. As to quaternary structure, (Microbial infection) Interacts with human herpes virus 1 (HHV-1) transcriptional regulator ICP22. Interacts with POLR2A via its hyperphosphorylated C-terminal domain (CTD). Interacts with CDK11A, CDK12 and CDK13. Isoforms 1 and 2, but not isoform 3, interact with CDK11B. May form a ternary complex with CDK11B and casein kinase II (CKII). Interacts with pre-mRNA-splicing factors, including at least SRSF1, SRSF2 and SRSF7/SLU7. As to expression, widely expressed. Overexpression in primary tumors of head and neck squamous cell carcinomas (HNSCC).

It is found in the nucleus speckle. The protein resides in the nucleus. It localises to the nucleoplasm. In terms of biological role, involved in pre-mRNA splicing. Functions in association with cyclin-dependent kinases (CDKs). Inhibited by the CDK-specific inhibitor CDKN1A/p21. May play a role in the regulation of RNA polymerase II (pol II). May be a candidate proto-oncogene in head and neck squamous cell carcinomas (HNSCC). In Homo sapiens (Human), this protein is Cyclin-L1 (CCNL1).